We begin with the raw amino-acid sequence, 266 residues long: Tryptophan synthase alpha chain (266 aa).

Residues Glu-52 and Asp-63 each act as proton acceptor in the active site.

The protein belongs to the TrpA family. Tetramer of two alpha and two beta chains.

It catalyses the reaction (1S,2R)-1-C-(indol-3-yl)glycerol 3-phosphate + L-serine = D-glyceraldehyde 3-phosphate + L-tryptophan + H2O. Its pathway is amino-acid biosynthesis; L-tryptophan biosynthesis; L-tryptophan from chorismate: step 5/5. In terms of biological role, the alpha subunit is responsible for the aldol cleavage of indoleglycerol phosphate to indole and glyceraldehyde 3-phosphate. This is Tryptophan synthase alpha chain from Nocardia farcinica (strain IFM 10152).